A 399-amino-acid chain; its full sequence is Enoyl-[acyl-carrier-protein] reductase [NADH] (399 aa).

NAD(+) is bound by residues 48 to 53 (GASTGY), 74 to 75 (FE), 111 to 112 (DA), and 139 to 140 (LA). Tyr225 contributes to the substrate binding site. The Proton donor role is filled by Tyr235. NAD(+) contacts are provided by residues Lys244 and 273-275 (VVT).

The protein belongs to the TER reductase family. In terms of assembly, monomer.

The enzyme catalyses a 2,3-saturated acyl-[ACP] + NAD(+) = a (2E)-enoyl-[ACP] + NADH + H(+). It functions in the pathway lipid metabolism; fatty acid biosynthesis. Functionally, involved in the final reduction of the elongation cycle of fatty acid synthesis (FAS II). Catalyzes the reduction of a carbon-carbon double bond in an enoyl moiety that is covalently linked to an acyl carrier protein (ACP). This Serratia proteamaculans (strain 568) protein is Enoyl-[acyl-carrier-protein] reductase [NADH].